The chain runs to 1039 residues: Probable calcium-transporting ATPase 9, plasma membrane-type (1039 aa).

The Cytoplasmic portion of the chain corresponds to Met-1–Thr-175. A run of 2 helical transmembrane segments spans residues Leu-176–Trp-196 and Gly-199–Val-219. The Cytoplasmic portion of the chain corresponds to Ser-220–Lys-250. Helical transmembrane passes span Ile-251–Pro-271 and Val-353–Leu-373. The Cytoplasmic portion of the chain corresponds to Val-374–Thr-406. The helical transmembrane segment at Ile-407–Ala-427 threads the bilayer. Asp-456 (4-aspartylphosphate intermediate) is an active-site residue. Mg(2+) contacts are provided by Asp-758 and Asp-762. The chain crosses the membrane as a helical span at residues Ile-825 to Ala-845. At Val-846–Gln-847 the chain is on the cytoplasmic side. 2 consecutive transmembrane segments (helical) span residues Leu-848 to Pro-868 and Asn-892 to Glu-912. The Cytoplasmic portion of the chain corresponds to Arg-913–Asn-960. Helical transmembrane passes span Trp-961 to Leu-981 and Trp-995 to Ile-1015. Residues Pro-1016 to Ile-1039 lie on the Cytoplasmic side of the membrane.

It belongs to the cation transport ATPase (P-type) (TC 3.A.3) family. Type IIB subfamily.

The protein localises to the membrane. It catalyses the reaction Ca(2+)(in) + ATP + H2O = Ca(2+)(out) + ADP + phosphate + H(+). With respect to regulation, activated by calmodulin. Its function is as follows. This magnesium-dependent enzyme catalyzes the hydrolysis of ATP coupled with the translocation of calcium from the cytosol out of the cell, into the endoplasmic reticulum, or into organelles. This Oryza sativa subsp. japonica (Rice) protein is Probable calcium-transporting ATPase 9, plasma membrane-type.